The sequence spans 81 residues: Neurotoxin LmNaTx11.1 (81 aa).

An N-terminal signal peptide occupies residues M1–S18. Residues K19–S80 enclose the LCN-type CS-alpha/beta domain. Intrachain disulfides connect C29–C79, C33–C56, C42–C61, and C46–C63.

The protein belongs to the long (4 C-C) scorpion toxin superfamily. Sodium channel inhibitor family. Beta subfamily. In terms of tissue distribution, expressed by the venom gland.

Its subcellular location is the secreted. In terms of biological role, binds voltage-independently at site-4 of sodium channels (Nav) and shift the voltage of activation toward more negative potentials thereby affecting sodium channel activation and promoting spontaneous and repetitive firing. The sequence is that of Neurotoxin LmNaTx11.1 from Lychas mucronatus (Chinese swimming scorpion).